We begin with the raw amino-acid sequence, 301 residues long: Fluoroquinolones export ATP-binding protein Rv2688c (301 aa).

The 229-residue stretch at 18–246 folds into the ABC transporter domain; it reads IRVRGLTFRY…RSRRRVRVEY (229 aa). 52–59 lines the ATP pocket; the sequence is GPSGAGKS.

It belongs to the ABC transporter superfamily. As to quaternary structure, the complex is composed of 2 ATP-binding proteins (Rv2688c) and 2 transmembrane proteins (Rv2686c and Rv2687c).

Its subcellular location is the cell membrane. With respect to regulation, inhibited by reserpine and verapamil. In terms of biological role, part of the ABC transporter complex Rv2686c/Rv2687c/Rv2688c involved in fluoroquinolones export. Confers resistance to ciprofloxacin and, to a lesser extent, norfloxacin, moxifloxacin and sparfloxacin. Probably responsible for energy coupling to the transport system. This chain is Fluoroquinolones export ATP-binding protein Rv2688c, found in Mycobacterium tuberculosis (strain ATCC 25618 / H37Rv).